Consider the following 488-residue polypeptide: Multidrug resistance outer membrane protein MdtP (488 aa).

The first 23 residues, Met1 to Gly23, serve as a signal peptide directing secretion. Cys24 carries the N-palmitoyl cysteine lipid modification. Cys24 is lipidated: S-diacylglycerol cysteine.

This sequence belongs to the outer membrane factor (OMF) (TC 1.B.17) family. As to quaternary structure, could be part of a tripartite efflux system composed of MdtN, MdtO and MdtP.

It localises to the cell outer membrane. In terms of biological role, could be involved in resistance to puromycin, acriflavine and tetraphenylarsonium chloride. The sequence is that of Multidrug resistance outer membrane protein MdtP (mdtP) from Escherichia coli O157:H7.